We begin with the raw amino-acid sequence, 508 residues long: Probable ligand-gated ion channel 46 (508 aa).

Positions Met-1–Ala-18 are cleaved as a signal peptide. Residues Arg-19–Tyr-274 are Extracellular-facing. N-linked (GlcNAc...) asparagine glycosylation is found at Asn-65, Asn-134, Asn-175, and Asn-201. The cysteines at positions 190 and 204 are disulfide-linked. Residues Ile-275–Leu-295 form a helical membrane-spanning segment. At Gly-296–Pro-301 the chain is on the cytoplasmic side. Residues Ala-302–Ile-321 form a helical membrane-spanning segment. Residues Ile-322 to Asp-335 lie on the Extracellular side of the membrane. Residues Val-336–Gly-356 traverse the membrane as a helical segment. Over Tyr-357–Lys-480 the chain is Cytoplasmic. Positions Ala-374–Glu-407 are disordered. A helical membrane pass occupies residues Ile-481 to Trp-501. At Gln-502–Tyr-508 the chain is on the extracellular side.

This sequence belongs to the ligand-gated ion channel (TC 1.A.9) family. Expressed in the nervous system, with high expression in cholinergic motor neurons and weak expression in GABAergic motor neurons.

The protein resides in the presynaptic cell membrane. It is found in the cell projection. The protein localises to the axon. Its subcellular location is the cytoplasmic vesicle. It localises to the secretory vesicle. The protein resides in the synaptic vesicle. Its function is as follows. Probable component of a ligand-gated anion channel. Negatively regulates synaptic transmission and synaptic vesicle release in response to acetylcholine in cholinergic motor neurons. Role in synaptic vesicle release kinetics may be in association with the ligand-gated ion channel protein acc-4. The polypeptide is Probable ligand-gated ion channel 46 (Caenorhabditis elegans).